Consider the following 68-residue polypeptide: ATP synthase protein 8 (68 aa).

A helical membrane pass occupies residues Thr-8–Thr-24. Lys-54 carries the post-translational modification N6-acetyllysine; alternate. Lys-54 bears the N6-succinyllysine; alternate mark. Lys-57 is modified (N6-acetyllysine).

Belongs to the ATPase protein 8 family. In terms of assembly, F-type ATPases have 2 components, CF(1) - the catalytic core - and CF(0) - the membrane proton channel. Component of an ATP synthase complex composed of ATP5PB, ATP5MC1, ATP5F1E, ATP5PD, ATP5ME, ATP5PF, ATP5MF, MT-ATP6, MT-ATP8, ATP5F1A, ATP5F1B, ATP5F1D, ATP5F1C, ATP5PO, ATP5MG, ATP5MK and ATP5MJ. Interacts with PRICKLE3.

The protein localises to the mitochondrion membrane. Its function is as follows. Mitochondrial membrane ATP synthase (F(1)F(0) ATP synthase or Complex V) produces ATP from ADP in the presence of a proton gradient across the membrane which is generated by electron transport complexes of the respiratory chain. F-type ATPases consist of two structural domains, F(1) - containing the extramembraneous catalytic core and F(0) - containing the membrane proton channel, linked together by a central stalk and a peripheral stalk. During catalysis, ATP synthesis in the catalytic domain of F(1) is coupled via a rotary mechanism of the central stalk subunits to proton translocation. Part of the complex F(0) domain. Minor subunit located with subunit a in the membrane. The protein is ATP synthase protein 8 (MT-ATP8) of Pongo pygmaeus (Bornean orangutan).